Reading from the N-terminus, the 186-residue chain is Lipoprotein signal peptidase (186 aa).

3 consecutive transmembrane segments (helical) span residues 11–31 (WIPL…KLLV), 44–64 (VLGD…FSIG), and 70–90 (VLRT…IVFS). Active-site residues include Asp128 and Asp150. Residues 145–165 (AFNIADAVIMTCGLLLIISFI) traverse the membrane as a helical segment.

It belongs to the peptidase A8 family.

The protein resides in the cell inner membrane. The enzyme catalyses Release of signal peptides from bacterial membrane prolipoproteins. Hydrolyzes -Xaa-Yaa-Zaa-|-(S,diacylglyceryl)Cys-, in which Xaa is hydrophobic (preferably Leu), and Yaa (Ala or Ser) and Zaa (Gly or Ala) have small, neutral side chains.. Its pathway is protein modification; lipoprotein biosynthesis (signal peptide cleavage). Its function is as follows. This protein specifically catalyzes the removal of signal peptides from prolipoproteins. The sequence is that of Lipoprotein signal peptidase from Treponema pallidum (strain Nichols).